Here is a 266-residue protein sequence, read N- to C-terminus: Phosphate import ATP-binding protein PstB 1 (266 aa).

Positions 21–261 constitute an ABC transporter domain; the sequence is ISTQDLSVFY…PKGEITEDYI (241 aa). ATP is bound at residue 54–61; it reads GGSGSGKS.

Belongs to the ABC transporter superfamily. Phosphate importer (TC 3.A.1.7) family. In terms of assembly, the complex is composed of two ATP-binding proteins (PstB), two transmembrane proteins (PstC and PstA) and a solute-binding protein (PstS).

It localises to the cell membrane. It catalyses the reaction phosphate(out) + ATP + H2O = ADP + 2 phosphate(in) + H(+). In terms of biological role, part of the ABC transporter complex PstSACB involved in phosphate import. Responsible for energy coupling to the transport system. The sequence is that of Phosphate import ATP-binding protein PstB 1 from Lactobacillus johnsonii (strain CNCM I-12250 / La1 / NCC 533).